The chain runs to 451 residues: D-inositol 3-phosphate glycosyltransferase (451 aa).

Histidine 37 contacts 1D-myo-inositol 3-phosphate. Residues 43–44 (QP) and glycine 51 each bind UDP-N-acetyl-alpha-D-glucosamine. Residues 48–53 (DAGGMN), lysine 106, tyrosine 138, threonine 162, and arginine 182 each bind 1D-myo-inositol 3-phosphate. Arginine 259, lysine 264, and arginine 323 together coordinate UDP-N-acetyl-alpha-D-glucosamine. Residues tyrosine 332, arginine 333, and alanine 335 each contribute to the Mg(2+) site. UDP-N-acetyl-alpha-D-glucosamine-binding residues include glutamate 345 and glutamate 353. Threonine 359 contacts Mg(2+).

Belongs to the glycosyltransferase group 1 family. MshA subfamily. As to quaternary structure, homodimer.

The catalysed reaction is 1D-myo-inositol 3-phosphate + UDP-N-acetyl-alpha-D-glucosamine = 1D-myo-inositol 2-acetamido-2-deoxy-alpha-D-glucopyranoside 3-phosphate + UDP + H(+). Catalyzes the transfer of a N-acetyl-glucosamine moiety to 1D-myo-inositol 3-phosphate to produce 1D-myo-inositol 2-acetamido-2-deoxy-glucopyranoside 3-phosphate in the mycothiol biosynthesis pathway. The polypeptide is D-inositol 3-phosphate glycosyltransferase (Corynebacterium kroppenstedtii (strain DSM 44385 / JCM 11950 / CIP 105744 / CCUG 35717)).